The sequence spans 256 residues: Phosphatidylglycerol--prolipoprotein diacylglyceryl transferase 2 (256 aa).

Transmembrane regions (helical) follow at residues 11–31 (LKIY…TLLF), 46–66 (FNAT…LYII), and 83–103 (FGNG…IALC). R130 contributes to the a 1,2-diacyl-sn-glycero-3-phospho-(1'-sn-glycerol) binding site. Transmembrane regions (helical) follow at residues 142-162 (AETT…PAGV), 164-184 (LYPT…FLLW), and 221-241 (VGLL…GILL).

This sequence belongs to the Lgt family.

Its subcellular location is the cell membrane. The catalysed reaction is L-cysteinyl-[prolipoprotein] + a 1,2-diacyl-sn-glycero-3-phospho-(1'-sn-glycerol) = an S-1,2-diacyl-sn-glyceryl-L-cysteinyl-[prolipoprotein] + sn-glycerol 1-phosphate + H(+). The protein operates within protein modification; lipoprotein biosynthesis (diacylglyceryl transfer). Catalyzes the transfer of the diacylglyceryl group from phosphatidylglycerol to the sulfhydryl group of the N-terminal cysteine of a prolipoprotein, the first step in the formation of mature lipoproteins. This is Phosphatidylglycerol--prolipoprotein diacylglyceryl transferase 2 from Clostridium perfringens (strain 13 / Type A).